Consider the following 150-residue polypeptide: MNTCIQLLILCLVTLTNSENLTDISTETTIENEKEDVTETELLETIENETETVTETELPETIGTEIPAEALNLPQSPKQKYCKSEGQYCSRTIFHRCCGNLVCQLHGFFNGTCVQCLAERKFCIWSSECCSKRCRLFRCRKNPYVQVIPY.

Positions 1–18 (MNTCIQLLILCLVTLTNS) are cleaved as a signal peptide. N-linked (GlcNAc...) asparagine glycans are attached at residues Asn-20, Asn-48, and Asn-110. Disulfide bonds link Cys-116/Cys-130, Cys-123/Cys-134, and Cys-129/Cys-139.

This sequence belongs to the UPF0506 family.

Its subcellular location is the secreted. This Schistosoma japonicum (Blood fluke) protein is UPF0506 protein SJCHGC03047.